Reading from the N-terminus, the 321-residue chain is Lipoyl synthase (321 aa).

[4Fe-4S] cluster contacts are provided by Cys-68, Cys-73, Cys-79, Cys-94, Cys-98, Cys-101, and Ser-308. Residues 80-297 (FNHGTATFMI…KEIALELGFT (218 aa)) enclose the Radical SAM core domain.

This sequence belongs to the radical SAM superfamily. Lipoyl synthase family. Requires [4Fe-4S] cluster as cofactor.

It localises to the cytoplasm. The catalysed reaction is [[Fe-S] cluster scaffold protein carrying a second [4Fe-4S](2+) cluster] + N(6)-octanoyl-L-lysyl-[protein] + 2 oxidized [2Fe-2S]-[ferredoxin] + 2 S-adenosyl-L-methionine + 4 H(+) = [[Fe-S] cluster scaffold protein] + N(6)-[(R)-dihydrolipoyl]-L-lysyl-[protein] + 4 Fe(3+) + 2 hydrogen sulfide + 2 5'-deoxyadenosine + 2 L-methionine + 2 reduced [2Fe-2S]-[ferredoxin]. The protein operates within protein modification; protein lipoylation via endogenous pathway; protein N(6)-(lipoyl)lysine from octanoyl-[acyl-carrier-protein]: step 2/2. Its function is as follows. Catalyzes the radical-mediated insertion of two sulfur atoms into the C-6 and C-8 positions of the octanoyl moiety bound to the lipoyl domains of lipoate-dependent enzymes, thereby converting the octanoylated domains into lipoylated derivatives. This is Lipoyl synthase from Vibrio atlanticus (strain LGP32) (Vibrio splendidus (strain Mel32)).